We begin with the raw amino-acid sequence, 71 residues long: Defensin-like protein 292 (71 aa).

3 cysteine pairs are disulfide-bonded: C44–C64, C50–C69, and C56–C71.

Belongs to the DEFL family.

The chain is Defensin-like protein 292 from Arabidopsis thaliana (Mouse-ear cress).